The primary structure comprises 252 residues: Eukaryotic translation initiation factor 3 subunit J (252 aa).

2 disordered regions span residues 24–107 (VPAG…TPEE) and 209–232 (KQSK…TMKD). Acidic residues predominate over residues 36–56 (EDEEDDVKDNWDDEEEEEEVK). Residues 57 to 107 (EAEVKQEPKVSEKKKIAEKIKEKEKQQKKKQEELKKRLEAPEEHKELTPEE) are compositionally biased toward basic and acidic residues. The stretch at 65–130 (KVSEKKKIAE…ESDLELAKET (66 aa)) forms a coiled coil.

It belongs to the eIF-3 subunit J family. As to quaternary structure, component of the eukaryotic translation initiation factor 3 (eIF-3) complex, which is composed of 13 subunits: EIF3A, EIF3B, EIF3C, EIF3D, EIF3E, EIF3F, EIF3G, EIF3H, EIF3I, EIF3J, EIF3K, EIF3L and EIF3M.

Its subcellular location is the cytoplasm. In terms of biological role, component of the eukaryotic translation initiation factor 3 (eIF-3) complex, which is involved in protein synthesis of a specialized repertoire of mRNAs and, together with other initiation factors, stimulates binding of mRNA and methionyl-tRNAi to the 40S ribosome. The eIF-3 complex specifically targets and initiates translation of a subset of mRNAs involved in cell proliferation. This is Eukaryotic translation initiation factor 3 subunit J from Gallus gallus (Chicken).